The following is a 257-amino-acid chain: Staphylococcal secretory antigen SsaA (257 aa).

An N-terminal signal peptide occupies residues 1 to 26 (MKKIATATIATAGIATFAFAHHDAQA). 8 repeat units span residues 73 to 75 (YNN), 76 to 78 (YNN), 84 to 86 (YNN), 87 to 89 (YSN), 90 to 92 (YNN), 93 to 95 (YSN), 96 to 98 (YNN), and 99 to 101 (YNN). The segment at 73–101 (YNNYNNYNYYGYNNYSNYNNYSNYNNYNN) is 8 X 3 AA repeats of Y-[NS]-N. The tract at residues 101–144 (NYQSNNTQSQRTTQPTGGLGASYSTSSSNVHVTTTSAPSSNGVS) is disordered. Over residues 107 to 116 (TQSQRTTQPT) the composition is skewed to polar residues. The span at 122-136 (SYSTSSSNVHVTTTS) shows a compositional bias: low complexity. The Peptidase C51 domain maps to 136 to 257 (SAPSSNGVSL…SQAASYNYIH (122 aa)).

It localises to the secreted. Functionally, not known; immunogenic protein expressed during sepsis and particularly during episodes of infective endocarditis. This is Staphylococcal secretory antigen SsaA (ssaA) from Staphylococcus epidermidis.